A 464-amino-acid polypeptide reads, in one-letter code: NADH-quinone oxidoreductase subunit N 1 (464 aa).

The next 14 helical transmembrane spans lie at 6-26, 33-53, 65-85, 98-118, 122-142, 155-175, 192-212, 237-257, 259-279, 285-305, 312-332, 356-376, 401-421, and 436-456; these read ILPE…ELFL, FLSV…FFVN, VDAL…FVLL, YGEL…MISS, AIIF…VGLF, YLVI…LVYA, FALG…AVPF, IGMY…FPDW, YVVM…AYAQ, LLAY…TAVD, LLFY…VLAI, LASM…AAVF, ASLI…LYSG, and FTVL…HVVL.

The protein belongs to the complex I subunit 2 family. In terms of assembly, NDH-1 is composed of 14 different subunits. Subunits NuoA, H, J, K, L, M, N constitute the membrane sector of the complex.

Its subcellular location is the cell inner membrane. It catalyses the reaction a quinone + NADH + 5 H(+)(in) = a quinol + NAD(+) + 4 H(+)(out). NDH-1 shuttles electrons from NADH, via FMN and iron-sulfur (Fe-S) centers, to quinones in the respiratory chain. The immediate electron acceptor for the enzyme in this species is believed to be ubiquinone. Couples the redox reaction to proton translocation (for every two electrons transferred, four hydrogen ions are translocated across the cytoplasmic membrane), and thus conserves the redox energy in a proton gradient. The polypeptide is NADH-quinone oxidoreductase subunit N 1 (Aquifex aeolicus (strain VF5)).